The chain runs to 62 residues: Small ribosomal subunit protein eS31 (62 aa).

4 residues coordinate Zn(2+): C29, C32, C48, and C51. The C4-type zinc-finger motif lies at 29–51 (CPRCGSFMAFHKWPVPRWHCGKC).

It belongs to the eukaryotic ribosomal protein eS31 family. As to quaternary structure, part of the 30S ribosomal subunit. Zn(2+) serves as cofactor.

The chain is Small ribosomal subunit protein eS31 from Hyperthermus butylicus (strain DSM 5456 / JCM 9403 / PLM1-5).